The following is a 267-amino-acid chain: Phosphonates import ATP-binding protein PhnC 2 (267 aa).

One can recognise an ABC transporter domain in the interval 3 to 247 (LSLDGVDLVH…ALDALYANEQ (245 aa)). 36–43 (GPSGAGKT) provides a ligand contact to ATP.

The protein belongs to the ABC transporter superfamily. Phosphonates importer (TC 3.A.1.9.1) family. In terms of assembly, the complex is composed of two ATP-binding proteins (PhnC), two transmembrane proteins (PhnE) and a solute-binding protein (PhnD).

It localises to the cell inner membrane. The enzyme catalyses phosphonate(out) + ATP + H2O = phosphonate(in) + ADP + phosphate + H(+). Part of the ABC transporter complex PhnCDE involved in phosphonates import. Responsible for energy coupling to the transport system. The sequence is that of Phosphonates import ATP-binding protein PhnC 2 from Pseudomonas aeruginosa (strain UCBPP-PA14).